The chain runs to 254 residues: uncharacterized protein (254 aa).

It belongs to the methyltransferase superfamily.

This is an uncharacterized protein from Mycobacterium tuberculosis (strain ATCC 25177 / H37Ra).